The sequence spans 218 residues: MNSVTVSHAPYTITYHDDWEPVMSQLVEFYNEVASWLLRDETSPIPDKFFIQLKQPLRNKRVCVCGIDPYPKDGTGVPFESPNFTKKSIKEIASSISRLTGVIDYKGYNLNIIDGVIPWNYYLSCKLGETKSHAIYWDKISKLLLQHITKHVSVLYCLGKTDYSNIRAKLESPVTTIVGYHPAARDRQFEKDRSFEIINVLLELDNKAPINWAQGFIY.

Catalysis depends on D68, which acts as the Proton acceptor.

The protein belongs to the uracil-DNA glycosylase (UDG) superfamily. UNG family. In terms of assembly, homodimer. Interacts with protein OPG148. Component of the Uracil-DNA glycosylase(UDG)-OPG148-polymerase complex; OPG148 and UDG form a heterodimeric processivity factor that associates with OPG71 to form the processive polymerase holoenzyme.

The catalysed reaction is Hydrolyzes single-stranded DNA or mismatched double-stranded DNA and polynucleotides, releasing free uracil.. In terms of biological role, plays an essential role in viral replication as a component of the DNA polymerase processivity factor. Excises uracil residues from the DNA which can arise as a result of misincorporation of dUMP residues by DNA polymerase or due to deamination of cytosine. The protein is Uracil-DNA glycosylase (OPG116) of Bos taurus (Bovine).